A 34-amino-acid chain; its full sequence is Peptidoglycan hydrolase P7 (34 aa).

A helical membrane pass occupies residues 10–26 (VLITLGVLAAVNKVSAL).

The protein resides in the virion membrane. Functionally, exolysin that catalyzes the cleavage of the host peptidoglycans during virus entry. The protein is Peptidoglycan hydrolase P7 (VII) of Pseudoalteromonas espejiana (Bacteriophage PM2).